A 175-amino-acid polypeptide reads, in one-letter code: MFTFLKLIAGFRVTFSAMFKKPVTEGYPEKPGPVAPRYHGRHQLNRWPDGLEKCIGCELCAWACPADAIFVESADNTEAERFSPGERYGRVYQINYLRCIGCGFCIEACPTRALTMINDYEMADDNRADLIYGKDQLLAPLQPGMAAPPHPMAPGSTERDYYLLDNIAAANREAR.

2 4Fe-4S ferredoxin-type domains span residues 44-74 (LNRWPDGLEKCIGCELCAWACPADAIFVESA) and 90-119 (RVYQINYLRCIGCGFCIEACPTRALTMIND). 8 residues coordinate [4Fe-4S] cluster: cysteine 54, cysteine 57, cysteine 60, cysteine 64, cysteine 99, cysteine 102, cysteine 105, and cysteine 109.

It belongs to the complex I 23 kDa subunit family. In terms of assembly, NDH-1 is composed of 14 different subunits. Subunits NuoA, H, J, K, L, M, N constitute the membrane sector of the complex. Requires [4Fe-4S] cluster as cofactor.

It is found in the cell membrane. The enzyme catalyses a quinone + NADH + 5 H(+)(in) = a quinol + NAD(+) + 4 H(+)(out). Functionally, NDH-1 shuttles electrons from NADH, via FMN and iron-sulfur (Fe-S) centers, to quinones in the respiratory chain. The immediate electron acceptor for the enzyme in this species is believed to be menaquinone. Couples the redox reaction to proton translocation (for every two electrons transferred, four hydrogen ions are translocated across the cytoplasmic membrane), and thus conserves the redox energy in a proton gradient. In Mycolicibacterium paratuberculosis (strain ATCC BAA-968 / K-10) (Mycobacterium paratuberculosis), this protein is NADH-quinone oxidoreductase subunit I 1.